The primary structure comprises 114 residues: Transcription initiation factor IIA subunit 2 (114 aa).

It belongs to the TFIIA subunit 2 family. In terms of assembly, TFIIA is a heterodimer composed of the large toa1 and the small toa2 subunits.

It is found in the nucleus. In terms of biological role, TFIIA is a component of the transcription machinery of RNA polymerase II and plays an important role in transcriptional activation. TFIIA in a complex with tbp mediates transcriptional activity. The polypeptide is Transcription initiation factor IIA subunit 2 (toa2) (Fusarium vanettenii (strain ATCC MYA-4622 / CBS 123669 / FGSC 9596 / NRRL 45880 / 77-13-4) (Fusarium solani subsp. pisi)).